The primary structure comprises 296 residues: Ribosomal protein L11 methyltransferase (296 aa).

Positions 139, 163, 185, and 232 each coordinate S-adenosyl-L-methionine.

This sequence belongs to the methyltransferase superfamily. PrmA family.

The protein localises to the cytoplasm. It carries out the reaction L-lysyl-[protein] + 3 S-adenosyl-L-methionine = N(6),N(6),N(6)-trimethyl-L-lysyl-[protein] + 3 S-adenosyl-L-homocysteine + 3 H(+). In terms of biological role, methylates ribosomal protein L11. The chain is Ribosomal protein L11 methyltransferase from Rippkaea orientalis (strain PCC 8801 / RF-1) (Cyanothece sp. (strain PCC 8801)).